A 569-amino-acid chain; its full sequence is S-(+)-linalool synthase, chloroplastic (569 aa).

A chloroplast-targeting transit peptide spans 1-39 (MALIATKISSRSCFVSAYPNNSPTFLISKFPNTVDSLSP). R294, D331, D335, R472, and D475 together coordinate (2E)-geranyl diphosphate. Positions 331 and 335 each coordinate Mg(2+). The short motif at 331–335 (DDIFD) is the DDXXD motif element. The Mg(2+) site is built by D475, S479, and E483.

It belongs to the terpene synthase family. Tpsb subfamily. The cofactor is Mg(2+). Requires Mn(2+) as cofactor. Predominantly expressed in flowers but also in stems and siliques.

The protein resides in the plastid. The protein localises to the chloroplast. The enzyme catalyses (2E)-geranyl diphosphate + H2O = (S)-linalool + diphosphate. The protein operates within secondary metabolite biosynthesis; terpenoid biosynthesis. Functionally, involved in monoterpene (C10) biosynthesis. The major product is (S)-linalool. The protein is S-(+)-linalool synthase, chloroplastic of Arabidopsis thaliana (Mouse-ear cress).